A 1015-amino-acid chain; its full sequence is Putative helicase mov-10-B.2 (1015 aa).

Positions 94–130 (QWFRPRRRQQNQANATPGNVSSVTPSSDQGPSCPESG) are disordered. The segment covering 109–123 (TPGNVSSVTPSSDQG) has biased composition (polar residues). ATP is bound at residue 555–562 (GPPGTGKT). A DEAG box motif is present at residues 677 to 680 (DEAG).

The protein belongs to the DNA2/NAM7 helicase family. SDE3 subfamily.

Its subcellular location is the cytoplasm. It localises to the P-body. It carries out the reaction ATP + H2O = ADP + phosphate + H(+). In terms of biological role, probable RNA helicase. Required for RNA-mediated gene silencing by the RNA-induced silencing complex (RISC). Required for both miRNA-mediated translational repression and miRNA-mediated cleavage of complementary mRNAs by RISC. This chain is Putative helicase mov-10-B.2 (mov10b.2), found in Danio rerio (Zebrafish).